The primary structure comprises 653 residues: Testicular spindle-associated protein SHCBP1L (653 aa).

The interval methionine 1–threonine 65 is disordered. Position 8 is a phosphoserine (serine 8). A compositionally biased stretch (polar residues) spans serine 28–lysine 41. A compositionally biased stretch (low complexity) spans proline 46–proline 56. At serine 53 the chain carries Phosphoserine. Residues isoleucine 299–glutamate 326 adopt a coiled-coil conformation. 4 PbH1 repeats span residues serine 493–threonine 514, glycine 515–proline 537, glycine 538–valine 571, and alanine 574–glutamine 596. Lysine 570 bears the N6-acetyllysine mark. At lysine 645 the chain carries N6-acetyllysine.

In terms of assembly, interacts with HSPA2; this interaction may promote the recruitment of HSPA2 to the spindle. Expressed in spermatocytes and elongating spermatids inside the seminiferous tubules (at protein level). Testis-specific.

The protein resides in the cytoplasm. It is found in the cytoskeleton. It localises to the spindle. Its function is as follows. Testis-specific spindle-associated factor that plays a role in spermatogenesis. In association with HSPA2, participates in the maintenance of spindle integrity during meiosis in male germ cells. This Homo sapiens (Human) protein is Testicular spindle-associated protein SHCBP1L.